A 908-amino-acid polypeptide reads, in one-letter code: MTSGEEEEGTREQVPVSQPTGTTSIVSTKEKQPNIFIRAIRATFGYRKTSLTLFVLLTIFFTVAFSSYDNSLDFTIDLPETKFEKQLLDSSWLDLQNIARYPHSYGSHANDKVHDYLESRISQTIKGKPFIEFDNGDEKILYNSSKKVVSYYEGNNLLVRVNGTDSSLPAFLLSAHYDSVPSSYGVTDDGMGIASLLGVLSYLANNKQPKRTVIFNFNNDEEFGLYGAQAFVTHPWFKQIQYFLNLEGTGAGGKAILFRGTDYGIVKHFDKVRYPYATSIFQQGFNNRLIHSETDYKVYKEAGLRGLDLAFYKPRDIYHTGEDNIKNINIRSLWHMLSNSIDFTNFISNSIIDNDTGKDEPAIYLSVLNYFFSTSVTTLNTINMVLIVLFPVLSGPLLFITVRYKKWNIGTANLFSLPLAIVITSLVGAVVVNQGFRLVNEFLPASRPMLLVTTTTSILLLTYYILLNGINFVSPSGDQKLVSIIQISFIYWIALIFVTRGLSQNAIGDDHTGEFAFTILFLLEATASLFGLIGWTFTRSVKEPTGDEEPLLNGRMERYVDGSDDEDDVEEEDDEDQSEEENHQHEMTVKHLMQHFGYDWSLQFLLIVPISSLVIYNSGWLVIDGINKSIQESLVAENFIYLIIQLFSQFWILPILPFVYKLNRFMVLGLIAFALVGVTLISSVDPFNQDNPLKLRFIERDGVAHVYGRTGVGISNILGDMPSVKESGVGIKCDSLPDGNEDCSYKAYLPGNSTIPSLSVKSINSTAQQAYINFGAIQINAPESRECSLEFKKVKAIVVYSGEITAKNFKAIPDGFSEDSKGNLYYKDVSGIDVAQLNKLGWNKKFNFGFYWLPDIDDDVAALPIHVECFWSDITIPAYDELLHYTPNWVTWANREKGLVSLTNRIEV.

The disordered stretch occupies residues 1–25 (MTSGEEEEGTREQVPVSQPTGTTSI). At 1–48 (MTSGEEEEGTREQVPVSQPTGTTSIVSTKEKQPNIFIRAIRATFGYRK) the chain is on the cytoplasmic side. A compositionally biased stretch (polar residues) spans 15 to 25 (PVSQPTGTTSI). The chain crosses the membrane as a helical span at residues 49 to 69 (TSLTLFVLLTIFFTVAFSSYD). At 70 to 381 (NSLDFTIDLP…FSTSVTTLNT (312 aa)) the chain is on the vacuolar side. N-linked (GlcNAc...) asparagine glycosylation is found at Asn143 and Asn162. Zn(2+) is bound by residues His176 and Asp188. Catalysis depends on Glu221, which acts as the Proton acceptor. Residues Glu222, Glu247, and His319 each coordinate Zn(2+). Residue Asn354 is glycosylated (N-linked (GlcNAc...) asparagine). The helical transmembrane segment at 382–402 (INMVLIVLFPVLSGPLLFITV) threads the bilayer. Residues 403-411 (RYKKWNIGT) lie on the Cytoplasmic side of the membrane. The helical transmembrane segment at 412 to 432 (ANLFSLPLAIVITSLVGAVVV) threads the bilayer. At 433-449 (NQGFRLVNEFLPASRPM) the chain is on the vacuolar side. A helical membrane pass occupies residues 450–470 (LLVTTTTSILLLTYYILLNGI). At 471–480 (NFVSPSGDQK) the chain is on the cytoplasmic side. A helical transmembrane segment spans residues 481–501 (LVSIIQISFIYWIALIFVTRG). Residues 502–514 (LSQNAIGDDHTGE) are Vacuolar-facing. A helical transmembrane segment spans residues 515–535 (FAFTILFLLEATASLFGLIGW). Residues 536-602 (TFTRSVKEPT…MQHFGYDWSL (67 aa)) lie on the Cytoplasmic side of the membrane. Residues 543–584 (EPTGDEEPLLNGRMERYVDGSDDEDDVEEEDDEDQSEEENHQ) form a disordered region. A compositionally biased stretch (acidic residues) spans 562-579 (GSDDEDDVEEEDDEDQSE). Residues 603–623 (QFLLIVPISSLVIYNSGWLVI) traverse the membrane as a helical segment. At 624–638 (DGINKSIQESLVAEN) the chain is on the vacuolar side. Residue Asn627 is glycosylated (N-linked (GlcNAc...) asparagine). Residues 639 to 659 (FIYLIIQLFSQFWILPILPFV) traverse the membrane as a helical segment. At 660–664 (YKLNR) the chain is on the cytoplasmic side. The chain crosses the membrane as a helical span at residues 665 to 685 (FMVLGLIAFALVGVTLISSVD). Topologically, residues 686–908 (PFNQDNPLKL…LVSLTNRIEV (223 aa)) are vacuolar. 2 N-linked (GlcNAc...) asparagine glycosylation sites follow: Asn752 and Asn764.

Belongs to the peptidase M28 family. Requires Zn(2+) as cofactor.

Its subcellular location is the vacuole membrane. May be involved in vacuolar sorting and osmoregulation. In Candida tropicalis (strain ATCC MYA-3404 / T1) (Yeast), this protein is Vacuolar membrane protease.